Here is a 244-residue protein sequence, read N- to C-terminus: 7-cyano-7-deazaguanine synthase (244 aa).

Residue 14–24 (FSGGQDSATCV) participates in ATP binding. Zn(2+)-binding residues include C202, C217, C220, and C223.

Belongs to the QueC family. Zn(2+) is required as a cofactor.

The catalysed reaction is 7-carboxy-7-deazaguanine + NH4(+) + ATP = 7-cyano-7-deazaguanine + ADP + phosphate + H2O + H(+). It participates in purine metabolism; 7-cyano-7-deazaguanine biosynthesis. Functionally, catalyzes the ATP-dependent conversion of 7-carboxy-7-deazaguanine (CDG) to 7-cyano-7-deazaguanine (preQ(0)). In Burkholderia cenocepacia (strain HI2424), this protein is 7-cyano-7-deazaguanine synthase.